A 329-amino-acid polypeptide reads, in one-letter code: ATPase ASNA1 homolog 1 (329 aa).

K26 to T33 contacts ATP. D55 is a catalytic residue. 2 residues coordinate ATP: E235 and N262. Residues C271 and C274 each contribute to the Zn(2+) site.

It belongs to the arsA ATPase family. In terms of assembly, homodimer.

It is found in the cytoplasm. The protein localises to the endoplasmic reticulum. ATPase required for the post-translational delivery of tail-anchored (TA) proteins to the endoplasmic reticulum. Recognizes and selectively binds the transmembrane domain of TA proteins in the cytosol. This complex then targets to the endoplasmic reticulum by membrane-bound receptors, where the tail-anchored protein is released for insertion. This process is regulated by ATP binding and hydrolysis. ATP binding drives the homodimer towards the closed dimer state, facilitating recognition of newly synthesized TA membrane proteins. ATP hydrolysis is required for insertion. Subsequently, the homodimer reverts towards the open dimer state, lowering its affinity for the membrane-bound receptor, and returning it to the cytosol to initiate a new round of targeting. This is ATPase ASNA1 homolog 1 from Paramecium tetraurelia.